Consider the following 81-residue polypeptide: UPF0434 protein msl4429 (81 aa).

This sequence belongs to the UPF0434 family.

The sequence is that of UPF0434 protein msl4429 from Mesorhizobium japonicum (strain LMG 29417 / CECT 9101 / MAFF 303099) (Mesorhizobium loti (strain MAFF 303099)).